The following is a 131-amino-acid chain: DCLPGWSSHEGHCYKVFNLAKTWEDAEKFCTEQANSGHLVSIDSKKEANFVAELVSQNIKETRRTDFVWIGLRVEDKRQHCSSEWSDGSSINYQNWIEAESKKCLGLEKQTRYRKWVNLNCGQPYRFTCEI.

Cystine bridges form between C2–C13, C30–C129, and C104–C121. One can recognise a C-type lectin domain in the interval 9 to 130; it reads HEGHCYKVFN…CGQPYRFTCE (122 aa).

The protein belongs to the snaclec family. Heterodimer; disulfide-linked. Expressed by the venom gland.

It localises to the secreted. In terms of biological role, interferes with one step of hemostasis (modulation of platelet aggregation, or coagulation cascade, for example). The protein is Snaclec A8 of Macrovipera lebetinus (Levantine viper).